A 436-amino-acid chain; its full sequence is Trigger factor (436 aa).

The 86-residue stretch at Gly-164–Pro-249 folds into the PPIase FKBP-type domain.

The protein belongs to the FKBP-type PPIase family. Tig subfamily.

It is found in the cytoplasm. It carries out the reaction [protein]-peptidylproline (omega=180) = [protein]-peptidylproline (omega=0). Its function is as follows. Involved in protein export. Acts as a chaperone by maintaining the newly synthesized protein in an open conformation. Functions as a peptidyl-prolyl cis-trans isomerase. The chain is Trigger factor from Ligilactobacillus salivarius (strain UCC118) (Lactobacillus salivarius).